The primary structure comprises 82 residues: MSSPTPPGGQRTLQKRKQGSSQKVAASAPKKNTNSNNSILKIYSDEATGLRVDPLVVLFLAVGFIFSVVALHVISKVAGKLF.

Residues 1-36 (MSSPTPPGGQRTLQKRKQGSSQKVAASAPKKNTNSN) are disordered. Residues 1–53 (MSSPTPPGGQRTLQKRKQGSSQKVAASAPKKNTNSNNSILKIYSDEATGLRVD) lie on the Cytoplasmic side of the membrane. The segment covering 19 to 36 (GSSQKVAASAPKKNTNSN) has biased composition (polar residues). A helical membrane pass occupies residues 54 to 74 (PLVVLFLAVGFIFSVVALHVI).

This sequence belongs to the SEC61-beta family. As to quaternary structure, component of the heterotrimeric Sec61 complex, which is composed of SSH1, SBH1 and SSS1. Presumably three to four Sec61 heterotrimers assemble into an oligomeric ring with a central aqueous pore. In cotranslational ER import, the pore diameter varies from 9-15 A in a ribosome-free resting state to 40-60 A in a functional state when associated with the ribosome. The Sec61 complex is part of a channel-forming translocon complex whose composition seem to change dependent upon different functional states. During post-translational ER import the Sec61 complex associates with the Sec62/63 complex to form the Sec complex. SBH1 interacts OST2, OST4 and WBP1 components of the OT complex.

Its subcellular location is the endoplasmic reticulum membrane. In terms of biological role, part of the Sec61 complex, which is the major component of a channel-forming translocon complex that mediates protein translocation across the endoplasmic reticulum (ER). The functional states of the translocon complex include co- and post-translational ER import, cotranslational membrane protein integration and retrograde transport of misfolded proteins out of the ER. In the cotranslational pathway, ribosomes synthesizing presecretory proteins are targeted to the translocon by the cytosolic signal recognition particle (SRP) and its ER-localized receptor. The association of the Sec61 complex with the ribosome is mediated by the 28S rRNA of the large ribosomal subunit. SRP-independent post-translational translocation requires the association of additional factors, such as the Sec62/63 complex and KAR2. This chain is Protein transport protein SBH1 (SBH1), found in Saccharomyces cerevisiae (strain ATCC 204508 / S288c) (Baker's yeast).